Reading from the N-terminus, the 403-residue chain is Phosphoglycerate kinase (403 aa).

Substrate contacts are provided by residues 21-23 (DFN), arginine 36, 59-62 (HLGR), arginine 119, and arginine 159. ATP is bound by residues lysine 214, glycine 301, glutamate 332, and 359–362 (GGDS).

Belongs to the phosphoglycerate kinase family. Monomer.

Its subcellular location is the cytoplasm. The catalysed reaction is (2R)-3-phosphoglycerate + ATP = (2R)-3-phospho-glyceroyl phosphate + ADP. It functions in the pathway carbohydrate degradation; glycolysis; pyruvate from D-glyceraldehyde 3-phosphate: step 2/5. In Lactobacillus acidophilus (strain ATCC 700396 / NCK56 / N2 / NCFM), this protein is Phosphoglycerate kinase.